A 748-amino-acid polypeptide reads, in one-letter code: Transducin-like enhancer protein 4 (748 aa).

Disordered stretches follow at residues 1-20 (MIRD…PHQP) and 157-332 (LPIK…DPLA). The tract at residues 1–112 (MIRDLSKMYR…SQEQQQLQAQ (112 aa)) is q domain. A GP domain region spans residues 113 to 179 (HLLTWTWSAC…HQRDRDSIKS (67 aa)). Over residues 158–177 (PIKDEKKHHDNDHQRDRDSI) the composition is skewed to basic and acidic residues. The span at 178 to 189 (KSSSVSPSASFR) shows a compositional bias: low complexity. The interval 180–249 (SSVSPSASFR…SPRGSPAHSP (70 aa)) is ccN domain. Residues Ser183, Ser187, Ser191, and Ser197 each carry the phosphoserine modification. Positions 190-227 (GSEKHRNSTDYSSESKKQKTEEKEIAARYDSDGEKSDD) are enriched in basic and acidic residues. Lys212 bears the N6-acetyllysine mark. Ser220 carries the post-translational modification Phosphoserine. Ser225 is subject to Phosphoserine; by CK2. Phosphoserine; by CDK1 is present on Ser240. 2 positions are modified to phosphoserine: Ser244 and Ser248. The segment covering 248–264 (SPRENGLDKTRLLKKDA) has biased composition (basic and acidic residues). Residues 250 to 427 (RENGLDKTRL…PGGKPAYSFH (178 aa)) are SP domain. The residue at position 256 (Lys256) is an N6-acetyllysine. Residues 265-280 (PISPASVASSSSTPSS) show a composition bias toward low complexity. At Ser267 the chain carries Phosphoserine. Residues 292–303 (TTPVSKSNTPTP) show a composition bias toward polar residues. Thr293 bears the Phosphothreonine mark. Ser296 and Ser298 each carry phosphoserine. 4 positions are modified to phosphothreonine: Thr300, Thr302, Thr309, and Thr315. Ser394 is modified (phosphoserine). WD repeat units lie at residues 460–498 (NHGE…NKSP), 506–545 (NRDN…PRIK), 550–589 (SSAP…LVRQ), 592–631 (GHTD…QLQQ), 633–672 (DFTS…KYQL), 674–713 (LHES…SIFQ), and 715–748 (KESS…EVIY).

Belongs to the WD repeat Groucho/TLE family. In terms of assembly, homooligomer and heterooligomer with other family members. Binds PAX5, LEF1, TCF7, TCF7L1 and TCF7L2. Interacts with ZNF703; TLE4 may mediate ZNF703 transcriptional repression. Interacts with SIX3 and SIX6. Interacts with PAX2. In terms of processing, phosphorylated. PAX5 binding increases phosphorylation. Ubiquitinated by XIAP/BIRC4.

It is found in the nucleus. In terms of biological role, transcriptional corepressor that binds to a number of transcription factors. Inhibits the transcriptional activation mediated by PAX5, and by CTNNB1 and TCF family members in Wnt signaling. The effects of full-length TLE family members may be modulated by association with dominant-negative AES. Essential for the transcriptional repressor activity of SIX3 during retina and lens development and for SIX3 transcriptional auto-repression. Involved in transcriptional repression of GNRHR and enhances MSX1-mediated transcriptional repression of CGA/alpha-GSU. The protein is Transducin-like enhancer protein 4 (Tle4) of Rattus norvegicus (Rat).